We begin with the raw amino-acid sequence, 177 residues long: Large ribosomal subunit protein uL6 (177 aa).

This sequence belongs to the universal ribosomal protein uL6 family. As to quaternary structure, part of the 50S ribosomal subunit.

Functionally, this protein binds to the 23S rRNA, and is important in its secondary structure. It is located near the subunit interface in the base of the L7/L12 stalk, and near the tRNA binding site of the peptidyltransferase center. This Cronobacter sakazakii (strain ATCC BAA-894) (Enterobacter sakazakii) protein is Large ribosomal subunit protein uL6.